The chain runs to 331 residues: DNA-directed RNA polymerase subunit alpha (331 aa).

The interval 1–232 is alpha N-terminal domain (alpha-NTD); that stretch reads MQGTFRDFLK…DQLSVFVDLE (232 aa). The interval 247 to 331 is alpha C-terminal domain (alpha-CTD); that stretch reads VDPILLRPID…AGLGEDRVVG (85 aa).

The protein belongs to the RNA polymerase alpha chain family. Homodimer. The RNAP catalytic core consists of 2 alpha, 1 beta, 1 beta' and 1 omega subunit. When a sigma factor is associated with the core the holoenzyme is formed, which can initiate transcription.

It catalyses the reaction RNA(n) + a ribonucleoside 5'-triphosphate = RNA(n+1) + diphosphate. Functionally, DNA-dependent RNA polymerase catalyzes the transcription of DNA into RNA using the four ribonucleoside triphosphates as substrates. In Alkalilimnicola ehrlichii (strain ATCC BAA-1101 / DSM 17681 / MLHE-1), this protein is DNA-directed RNA polymerase subunit alpha.